We begin with the raw amino-acid sequence, 274 residues long: Penicillin-insensitive murein endopeptidase (274 aa).

The N-terminal stretch at 1–19 is a signal peptide; sequence MKNTVIALLALLASAGSLA. 3 disulfides stabilise this stretch: C44–C265, C187–C235, and C216–C223. Zn(2+) is bound by residues H110, H113, D120, D147, H150, and H211. The tract at residues 224–263 is disordered; sequence EDQAPPPPGDGCGAELQSWFEPPKPGSTPPVKKTPPPLPP. Positions 245 to 263 are enriched in pro residues; it reads PPKPGSTPPVKKTPPPLPP.

It belongs to the peptidase M74 family. As to quaternary structure, dimer. Requires Zn(2+) as cofactor.

It is found in the periplasm. Its function is as follows. Murein endopeptidase that cleaves the D-alanyl-meso-2,6-diamino-pimelyl amide bond that connects peptidoglycan strands. Likely plays a role in the removal of murein from the sacculus. The polypeptide is Penicillin-insensitive murein endopeptidase (Klebsiella pneumoniae (strain 342)).